The following is a 156-amino-acid chain: Small ribosomal subunit protein uS7 (156 aa).

It belongs to the universal ribosomal protein uS7 family. As to quaternary structure, part of the 30S ribosomal subunit. Contacts proteins S9 and S11.

Functionally, one of the primary rRNA binding proteins, it binds directly to 16S rRNA where it nucleates assembly of the head domain of the 30S subunit. Is located at the subunit interface close to the decoding center, probably blocks exit of the E-site tRNA. The polypeptide is Small ribosomal subunit protein uS7 (Synechococcus sp. (strain JA-3-3Ab) (Cyanobacteria bacterium Yellowstone A-Prime)).